A 370-amino-acid polypeptide reads, in one-letter code: Holliday junction branch migration complex subunit RuvB 2 (370 aa).

The interval M1–R54 is disordered. The segment at D13 to Y214 is large ATPase domain (RuvB-L). ATP-binding positions include L53, R54, G95, K98, T99, T100, E161–F163, R204, Y214, and R251. T99 lines the Mg(2+) pocket. The segment at E215–Q285 is small ATPAse domain (RuvB-S). Positions P288–S370 are head domain (RuvB-H). 2 residues coordinate DNA: R343 and R348.

The protein belongs to the RuvB family. In terms of assembly, homohexamer. Forms an RuvA(8)-RuvB(12)-Holliday junction (HJ) complex. HJ DNA is sandwiched between 2 RuvA tetramers; dsDNA enters through RuvA and exits via RuvB. An RuvB hexamer assembles on each DNA strand where it exits the tetramer. Each RuvB hexamer is contacted by two RuvA subunits (via domain III) on 2 adjacent RuvB subunits; this complex drives branch migration. In the full resolvosome a probable DNA-RuvA(4)-RuvB(12)-RuvC(2) complex forms which resolves the HJ.

The protein localises to the cytoplasm. It carries out the reaction ATP + H2O = ADP + phosphate + H(+). Functionally, the RuvA-RuvB-RuvC complex processes Holliday junction (HJ) DNA during genetic recombination and DNA repair, while the RuvA-RuvB complex plays an important role in the rescue of blocked DNA replication forks via replication fork reversal (RFR). RuvA specifically binds to HJ cruciform DNA, conferring on it an open structure. The RuvB hexamer acts as an ATP-dependent pump, pulling dsDNA into and through the RuvAB complex. RuvB forms 2 homohexamers on either side of HJ DNA bound by 1 or 2 RuvA tetramers; 4 subunits per hexamer contact DNA at a time. Coordinated motions by a converter formed by DNA-disengaged RuvB subunits stimulates ATP hydrolysis and nucleotide exchange. Immobilization of the converter enables RuvB to convert the ATP-contained energy into a lever motion, pulling 2 nucleotides of DNA out of the RuvA tetramer per ATP hydrolyzed, thus driving DNA branch migration. The RuvB motors rotate together with the DNA substrate, which together with the progressing nucleotide cycle form the mechanistic basis for DNA recombination by continuous HJ branch migration. Branch migration allows RuvC to scan DNA until it finds its consensus sequence, where it cleaves and resolves cruciform DNA. This is Holliday junction branch migration complex subunit RuvB 2 from Synechococcus sp. (strain JA-3-3Ab) (Cyanobacteria bacterium Yellowstone A-Prime).